The following is a 258-amino-acid chain: UPF0246 protein ETA_07010 (258 aa).

The protein belongs to the UPF0246 family.

In Erwinia tasmaniensis (strain DSM 17950 / CFBP 7177 / CIP 109463 / NCPPB 4357 / Et1/99), this protein is UPF0246 protein ETA_07010.